The primary structure comprises 109 residues: Putative small proline-rich protein 2J (109 aa).

Repeat copies occupy residues 21 to 29 (RSAQSPVLC), 30 to 38 (QSAPSLVLL), 39 to 47 (QSAQSPIHC), 48 to 56 (QSALSHAHL), and 57 to 65 (SHASRNALL). The tract at residues 21-65 (RSAQSPVLCQSAPSLVLLQSAQSPIHCQSALSHAHLSHASRNALL) is 5 X 9 AA approximate tandem repeats. The interval 76–109 (AHPRANKGFSSLQNQKKRTESILHKSIATPPSSI) is disordered.

It belongs to the cornifin (SPRR) family. Not expressed in uterus.

The protein localises to the cytoplasm. Cross-linked envelope protein of keratinocytes. It is a keratinocyte protein that first appears in the cell cytosol, but ultimately becomes cross-linked to membrane proteins by transglutaminase. All that results in the formation of an insoluble envelope beneath the plasma membrane. The chain is Putative small proline-rich protein 2J (Sprr2j) from Mus musculus (Mouse).